The sequence spans 150 residues: Large ribosomal subunit protein bL9 (150 aa).

The protein belongs to the bacterial ribosomal protein bL9 family.

Its function is as follows. Binds to the 23S rRNA. The protein is Large ribosomal subunit protein bL9 of Polaromonas naphthalenivorans (strain CJ2).